The chain runs to 399 residues: Pre-mycofactocin synthase (399 aa).

Residues 4–386 form the FMN hydroxy acid dehydrogenase domain; it reads ARDIWFETVA…VPEDILVPEG (383 aa). FMN is bound by residues S111 and Q131. Y133 lines the a 2-oxocarboxylate pocket. Position 159 (T159) interacts with FMN. R168 lines the a 2-oxocarboxylate pocket. K257 contributes to the FMN binding site. The Proton acceptor role is filled by H281. FMN-binding positions include 312–316 and 335–336; these read DGGIR and GR.

The protein belongs to the FMN-dependent alpha-hydroxy acid dehydrogenase family. FMN serves as cofactor.

The enzyme catalyses 3-amino-5-[(4-hydroxyphenyl)methyl]-4,4-dimethyl-2-pyrrolidin-2-one + O2 + H2O = pre-mycofactocin + H2O2 + NH4(+). Involved in the biosynthesis of the enzyme cofactor mycofactocin (MFT). Catalyzes the oxidative deamination of AHDP (3-amino-5-[(4-hydroxyphenyl)methyl]-4,4-dimethyl-2-pyrrolidin-2-one), forming an alpha-keto amide moiety on the resulting molecule, which is called pre-mycofactocin (PMFT). This reaction occurs via a 5-[(4-hydroxyphenyl)methyl]-3-imino-4,4-dimethylpyrrolidin-2-one intermediate, which converts to PMFT. The alpha-keto amide moiety is the redox-active center for the redox activity of mycofactocin. Is required for the in vivo ethanol assimilation in M.smegmatis. The chain is Pre-mycofactocin synthase from Mycolicibacterium smegmatis (strain ATCC 700084 / mc(2)155) (Mycobacterium smegmatis).